Reading from the N-terminus, the 116-residue chain is MTDSEKSATIKVTDASFATDVLSSNKPVLVDFWATWCGPCKMVAPVLEEIATERATDLTVAKLDVDTNPETARNFQVVSIPTLILFKDGQPVKRIVGAKGKAALLRELSDVVPNLN.

One can recognise a Thioredoxin domain in the interval 2 to 113 (TDSEKSATIK…LLRELSDVVP (112 aa)). The cysteines at positions 37 and 40 are disulfide-linked.

This sequence belongs to the thioredoxin family.

In terms of biological role, participates in various redox reactions through the reversible oxidation of its active center dithiol to a disulfide and catalyzes dithiol-disulfide exchange reactions. The chain is Thioredoxin (trxA) from Mycobacterium bovis (strain ATCC BAA-935 / AF2122/97).